Here is a 422-residue protein sequence, read N- to C-terminus: Glyceraldehyde-3-phosphate dehydrogenase GAPCP1, chloroplastic (422 aa).

The N-terminal 69 residues, Met-1–Ala-69, are a transit peptide targeting the chloroplast. Positions Ser-50 to Ser-63 are enriched in polar residues. The interval Ser-50–Ser-84 is disordered. At Thr-70 the chain carries N-acetylthreonine. NAD(+) is bound by residues Arg-96–Ile-97, Asp-118, and Arg-164. D-glyceraldehyde 3-phosphate contacts are provided by residues Ser-235–Thr-237, Thr-266, Thr-295–Gly-296, and Arg-318. Cys-236 (nucleophile) is an active-site residue. Asn-400 lines the NAD(+) pocket.

Belongs to the glyceraldehyde-3-phosphate dehydrogenase family. As to quaternary structure, homotetramer. In terms of tissue distribution, expressed in shoot and root vasculature, leaf veins and vascular tissue of flowers and siliques.

It is found in the plastid. The protein localises to the chloroplast stroma. The enzyme catalyses D-glyceraldehyde 3-phosphate + phosphate + NAD(+) = (2R)-3-phospho-glyceroyl phosphate + NADH + H(+). In terms of biological role, involved in plastidial glycolytic pathway and plays a specific role in glycolytic energy production in non-green plastids and chloroplasts. Essential for breakdown of starch to form sucrose for export to non-photosynthetic tissues, and to generate primary metabolites for anabolic pathways such as fatty acid and amino acid synthesis. Plays an important role in plant development by providing substrates for the phosphorylated pathway of serine biosynthesis in roots. Plays a crucial role in pollen development. Functionally redundant with GAPCP2. The polypeptide is Glyceraldehyde-3-phosphate dehydrogenase GAPCP1, chloroplastic (GAPCP1) (Arabidopsis thaliana (Mouse-ear cress)).